We begin with the raw amino-acid sequence, 314 residues long: MGPLINRCKKILLPTTVPPATMRIWLLGGLLPFLLLLSGLQRPTEGSEVAIKIDFDFAPGSFDDQYQGCSKQVMEKLTQGDYFTKDIEAQKNYFRMWQKAHLAWLNQGKVLPQNMTTTHAVAILFYTLNSNVHSDFTRAMASVARTPQQYERSFHFKYLHYYLTSAIQLLRKDSIMENGTLCYEVHYRTKDVHFNAYTGATIRFGQFLSTSLLKEEAQEFGNQTLFTIFTCLGAPVQYFSLKKEVLIPPYELFKVINMSYHPRGDWLQLRSTGNLSTYNCQLLKASSKKCIPDPIAIASLSFLTSVIIFSKSRV.

Residues 1-46 (MGPLINRCKKILLPTTVPPATMRIWLLGGLLPFLLLLSGLQRPTEG) form the signal peptide. Disulfide bonds link Cys-69–Cys-280 and Cys-182–Cys-231. A TR mART core domain is found at 91-276 (KNYFRMWQKA…LQLRSTGNLS (186 aa)). N-linked (GlcNAc...) asparagine glycosylation occurs at Asn-114. Tyr-126 serves as a coordination point for NAD(+). Residue Asn-178 is glycosylated (N-linked (GlcNAc...) asparagine). An NAD(+)-binding site is contributed by Gln-206. N-linked (GlcNAc...) asparagine glycosylation is present at Asn-222. Position 240 (Ser-240) interacts with NAD(+). N-linked (GlcNAc...) asparagine glycosylation is found at Asn-257 and Asn-274. A lipid anchor (GPI-anchor amidated alanine) is attached at Ala-285. The propeptide at 286–314 (SSKKCIPDPIAIASLSFLTSVIIFSKSRV) is removed in mature form.

It belongs to the Arg-specific ADP-ribosyltransferase family. Expressed in spleen and T-cells.

Its subcellular location is the cell membrane. The enzyme catalyses L-arginyl-[protein] + NAD(+) = N(omega)-(ADP-D-ribosyl)-L-arginyl-[protein] + nicotinamide + H(+). The chain is Ecto-ADP-ribosyltransferase 4 (ART4) from Homo sapiens (Human).